A 433-amino-acid chain; its full sequence is Glutamate--tRNA ligase (433 aa).

Positions 10-20 (PSPTGYLHIGG) match the 'HIGH' region motif. Positions 211-215 (KMSKR) match the 'KMSKS' region motif. K214 provides a ligand contact to ATP.

Belongs to the class-I aminoacyl-tRNA synthetase family. Glutamate--tRNA ligase type 1 subfamily. As to quaternary structure, monomer.

The protein resides in the cytoplasm. It carries out the reaction tRNA(Glu) + L-glutamate + ATP = L-glutamyl-tRNA(Glu) + AMP + diphosphate. Functionally, catalyzes the attachment of glutamate to tRNA(Glu) in a two-step reaction: glutamate is first activated by ATP to form Glu-AMP and then transferred to the acceptor end of tRNA(Glu). In Akkermansia muciniphila (strain ATCC BAA-835 / DSM 22959 / JCM 33894 / BCRC 81048 / CCUG 64013 / CIP 107961 / Muc), this protein is Glutamate--tRNA ligase.